Here is a 147-residue protein sequence, read N- to C-terminus: Hemoglobin subunit beta-2 (147 aa).

Residue Val-2 is modified to N-acetylvaline. A Globin domain is found at 3–147 (HLTDAEKSAV…VATALAHKYH (145 aa)). Residue Lys-18 is modified to N6-succinyllysine. Tyr-42 carries the phosphotyrosine modification. Phosphoserine is present on residues Ser-45, Ser-51, and Ser-53. An N6-succinyllysine modification is found at Lys-60. Heme b is bound by residues His-64 and His-93. Asymmetric dimethylarginine is present on Arg-105. The residue at position 124 (Thr-124) is a Phosphothreonine.

It belongs to the globin family. Heterotetramer of two alpha chains and two beta chains. In terms of tissue distribution, red blood cells.

Its function is as follows. Involved in oxygen transport from the lung to the various peripheral tissues. This Mus musculus (Mouse) protein is Hemoglobin subunit beta-2 (Hbb-b2).